The chain runs to 489 residues: uncharacterized protein (489 aa).

The residue at position 26 (Thr-26) is a Phosphothreonine. Ser-27 carries the post-translational modification Phosphoserine. Helical transmembrane passes span 63-83 (IVYLIIVACGSFIITGGIEFA), 182-202 (LVWSVPLWFLFWPATVGILCA), and 221-241 (VFKLIFGGGEGFVLTPWIAFL). Disordered stretches follow at residues 260–312 (PKTS…APLE), 401–435 (STLLPQDGNAVHHDTDAPSLSNVRKSVDSPRVPPS), and 450–489 (PSINNVGGSTAPSVNNQEREYDYDDTSSRSSTLTERPVVH). A Phosphoserine modification is found at Ser-263. Over residues 268 to 282 (QRGTSSSQPSENDAN) the composition is skewed to polar residues. Positions 450 to 465 (PSINNVGGSTAPSVNN) are enriched in polar residues. Residues 477–489 (SRSSTLTERPVVH) show a composition bias toward low complexity.

Its subcellular location is the endoplasmic reticulum membrane. This is an uncharacterized protein from Schizosaccharomyces pombe (strain 972 / ATCC 24843) (Fission yeast).